We begin with the raw amino-acid sequence, 149 residues long: MFQDAEEKPRTLHDLCQALETSVHEIELKCVECKKTLQRSEVYDFVFADLRIVYRDGNPFAVCKVCLRLLSKISEYRHYNYSLYGDTLEQTLKKCLNEILIRCIICQRPLCPQEKKRHVDLNKRFHNISGRWTGRCAVCWRPRRRQTQV.

2 zinc fingers span residues 30 to 66 (CVEC…CKVC) and 103 to 139 (CIIC…CAVC). The PDZ-binding domain motif lies at 147 to 149 (TQV).

Belongs to the papillomaviridae E6 protein family. In terms of assembly, forms homodimers. Interacts with ubiquitin-protein ligase UBE3A/E6-AP and thus forms a complex with human TP53. Interacts with human NFX1 and MAGI3. Interacts with human IRF3; this interaction inhibits the establishment of antiviral state. Interacts with human TYK2; this interaction inhibits JAK-STAT activation by interferon alpha. Interacts with host DLG1; this interaction leads to the proteasomal degradation of DLG1.

It localises to the host cytoplasm. The protein localises to the host nucleus. Plays a major role in the induction and maintenance of cellular transformation. Acts mainly as an oncoprotein by stimulating the destruction of many host cell key regulatory proteins. E6 associates with host UBE3A/E6-AP ubiquitin-protein ligase, and inactivates tumor suppressors TP53 and TP73 by targeting them to the 26S proteasome for degradation. In turn, DNA damage and chromosomal instabilities increase and lead to cell proliferation and cancer development. The complex E6/E6AP targets several other substrates to degradation via the proteasome including host DLG1 or NFX1, a repressor of human telomerase reverse transcriptase (hTERT). The resulting increased expression of hTERT prevents the shortening of telomere length leading to cell immortalization. Other cellular targets including BAK1, Fas-associated death domain-containing protein (FADD) and procaspase 8, are degraded by E6/E6AP causing inhibition of apoptosis. E6 also inhibits immune response by interacting with host IRF3 and TYK2. These interactions prevent IRF3 transcriptional activities and inhibit TYK2-mediated JAK-STAT activation by interferon alpha resulting in inhibition of the interferon signaling pathway. This Human papillomavirus 58 protein is Protein E6.